The following is a 472-amino-acid chain: Eukaryotic translation initiation factor 2 subunit 3, X-linked (472 aa).

The residue at position 2 (Ala2) is an N-acetylalanine. A Phosphoserine modification is found at Ser16. Residues 39 to 248 (QATINIGTIG…IVKKIPVPPR (210 aa)) enclose the tr-type G domain. The segment at 48 to 55 (GHVAHGKS) is G1. 51–56 (AHGKST) is a GTP binding site. Positions 76-80 (NITIK) are G2. Residues 134-137 (DCPG) form a G3 region. GTP contacts are provided by residues 190–193 (NKID) and 225–227 (SAQ). The tract at residues 190–193 (NKID) is G4. The interval 225–227 (SAQ) is G5. Residues 457–469 (GQIRRGVTIKPTV) are interacts with Cdc123.

It belongs to the TRAFAC class translation factor GTPase superfamily. Classic translation factor GTPase family. EIF2G subfamily. Eukaryotic translation initiation factor 2 eIF2 is a heterotrimeric complex composed of an alpha (EIF2S1), a beta (EIF2S2) and a gamma (EIF2S3) chain. eIF2 is member of the 43S pre-initiation complex (43S PIC). Interacts (via C-terminus) with CDC123; the interaction is direct. In terms of tissue distribution, widely expressed.

It is found in the cytoplasm. The protein resides in the cytosol. The catalysed reaction is GTP + H2O = GDP + phosphate + H(+). Functionally, member of the eIF2 complex that functions in the early steps of protein synthesis by forming a ternary complex with GTP and initiator tRNA. This complex binds to a 40S ribosomal subunit, followed by mRNA binding to form the 43S pre-initiation complex (43S PIC). Junction of the 60S ribosomal subunit to form the 80S initiation complex is preceded by hydrolysis of the GTP bound to eIF2 and release of an eIF2-GDP binary complex. In order for eIF2 to recycle and catalyze another round of initiation, the GDP bound to eIF2 must exchange with GTP by way of a reaction catalyzed by eIF-2B. Along with its paralog on chromosome Y, may contribute to spermatogenesis up to the round spermatid stage. This chain is Eukaryotic translation initiation factor 2 subunit 3, X-linked (Eif2s3), found in Rattus norvegicus (Rat).